The following is a 327-amino-acid chain: DNA repair protein XRCC4 (327 aa).

Residues 1-211 (MERKVSRISL…QLEKNLKPER (211 aa)) are interaction with IFFO1. Ser53 carries the phosphoserine modification. Coiled coils occupy residues 133–153 (IAEKQAKNEHLQKENDRLLRD) and 183–213 (LNEKKTKIRSLHKLLDEIQQLEKNLKPERET). Interaction with LIG4 stretches follow at residues 179–210 (FILVLNEKKTKIRSLHKLLDEIQQLEKNLKPE) and 179–211 (FILVLNEKKTKIRSLHKLLDEIQQLEKNLKPER). A Phosphoserine modification is found at Ser192. Lys208 participates in a covalent cross-link: Glycyl lysine isopeptide (Lys-Gly) (interchain with G-Cter in SUMO). Position 226 is a phosphotyrosine (Tyr226). Phosphoserine is present on Ser229. Position 230 is a phosphothreonine (Thr230). 2 positions are modified to phosphoserine: Ser249 and Ser253. The disordered stretch occupies residues 255 to 327 (DVTDIAPSRK…RNSSPEDIFD (73 aa)). The Nuclear localization signal signature appears at 263–268 (RKRRHH). A Glycyl lysine isopeptide (Lys-Gly) (interchain with G-Cter in ubiquitin) cross-link involves residue Lys289. Residues Ser294, Ser295, Ser308, and Ser313 each carry the phosphoserine modification. A compositionally biased stretch (polar residues) spans 308–327 (SAGNMSLETLRNSSPEDIFD). Residue Thr316 is modified to Phosphothreonine. Ser320 and Ser321 each carry phosphoserine.

Belongs to the XRCC4-XLF family. XRCC4 subfamily. In terms of assembly, homodimer and homotetramer in solution. Interacts with NHEJ1/XLF; the interaction is direct and is mediated via a head-to-head interaction between N-terminal head regions. Interacts with LIG4; the LIG4-XRCC4 subcomplex has a 1:2 stoichiometry and XRCC4 is required for LIG4 stability. Component of the core long-range non-homologous end joining (NHEJ) complex (also named DNA-PK complex) composed of PRKDC, LIG4, XRCC4, XRCC6/Ku70, XRCC5/Ku86 and NHEJ1/XLF. Additional component of the NHEJ complex includes PAXX. Following autophosphorylation, PRKDC dissociates from DNA, leading to formation of the short-range NHEJ complex, composed of LIG4, XRCC4, XRCC6/Ku70, XRCC5/Ku86 and NHEJ1/XLF. Interacts with PRKDC; the interaction is direct. Interacts with XRCC6/Ku70; the interaction is direct. Interacts with APTX and APLF. Forms a heterotetramer with IFFO1; the interaction involves LIG4-free XRCC4 and leads to the relocalization of IFFO1 to the sites of DNA damage. Interacts with PNKP; mainly interacts with PNKP when phosphorylated at Thr-230, but is also able to interact at much lower level with PNKP when not unphosphorylated. Interacts with POLL (DNA polymerase lambda). Interacts with XKR4; interacts with the processed form of XKR4, which is cleaved by caspase. Post-translationally, phosphorylated by PRKDC at the C-terminus in response to DNA damage; Ser-253 constitutes the main phosphorylation sites. Phosphorylations by PRKDC at the C-terminus of XRCC4 and NHEJ1/XLF are highly redundant and regulate ability of the XRCC4-NHEJ1/XLF subcomplex to bridge DNA. Phosphorylation by PRKDC does not prevent interaction with NHEJ1/XLF but disrupts ability to bridge DNA and promotes detachment from DNA. Phosphorylation at Ser-320 and Ser-321 by PRKDC promotes recognition by the SCF(FBXW7) complex and subsequent ubiquitination via 'Lys-63'-linked ubiquitin. Phosphorylation at Thr-230 by CK2 promotes interaction with PNKP; regulating PNKP activity and localization to DNA damage sites. Phosphorylation by CK2 promotes interaction with APTX. In terms of processing, ubiquitinated at Lys-289 by the SCF(FBXW7) complex via 'Lys-63'-linked ubiquitination, thereby promoting double-strand break repair: the SCF(FBXW7) complex specifically recognizes XRCC4 when phosphorylated at Ser-320 and Ser-321 by PRKDC, and 'Lys-63'-linked ubiquitination facilitates DNA non-homologous end joining (NHEJ) by enhancing association with XRCC5/Ku80 and XRCC6/Ku70. Monoubiquitinated. Undergoes proteolytic processing by caspase-3 (CASP3). This generates the protein XRCC4, C-terminus (XRCC4/C), which translocates to the cytoplasm and activates phospholipid scramblase activity of XKR4, thereby promoting phosphatidylserine exposure on apoptotic cell surface.

The protein localises to the nucleus. It localises to the chromosome. Its subcellular location is the cytoplasm. In terms of biological role, DNA non-homologous end joining (NHEJ) core factor, required for double-strand break repair and V(D)J recombination. Acts as a scaffold protein that regulates recruitment of other proteins to DNA double-strand breaks (DSBs). Associates with NHEJ1/XLF to form alternating helical filaments that bridge DNA and act like a bandage, holding together the broken DNA until it is repaired. The XRCC4-NHEJ1/XLF subcomplex binds to the DNA fragments of a DSB in a highly diffusive manner and robustly bridges two independent DNA molecules, holding the broken DNA fragments in close proximity to one other. The mobility of the bridges ensures that the ends remain accessible for further processing by other repair factors. Plays a key role in the NHEJ ligation step of the broken DNA during DSB repair via direct interaction with DNA ligase IV (LIG4): the LIG4-XRCC4 subcomplex reseals the DNA breaks after the gap filling is completed. XRCC4 stabilizes LIG4, regulates its subcellular localization and enhances LIG4's joining activity. Binding of the LIG4-XRCC4 subcomplex to DNA ends is dependent on the assembly of the DNA-dependent protein kinase complex DNA-PK to these DNA ends. Promotes displacement of PNKP from processed strand break termini. Functionally, acts as an activator of the phospholipid scramblase activity of XKR4. This form, which is generated upon caspase-3 (CASP3) cleavage, translocates into the cytoplasm and interacts with XKR4, thereby promoting phosphatidylserine scramblase activity of XKR4 and leading to phosphatidylserine exposure on apoptotic cell surface. The chain is DNA repair protein XRCC4 from Cricetulus griseus (Chinese hamster).